A 57-amino-acid polypeptide reads, in one-letter code: uncharacterized protein (57 aa).

Residues 34–51 form a helical membrane-spanning segment; the sequence is TALLDAAAVVVVPGLLAA.

The protein localises to the membrane. This is an uncharacterized protein from Dictyostelium discoideum (Social amoeba).